The primary structure comprises 305 residues: Orotidine 5'-phosphate decarboxylase (305 aa).

The active-site Proton donor is lysine 108.

The protein belongs to the OMP decarboxylase family. Type 2 subfamily.

The catalysed reaction is orotidine 5'-phosphate + H(+) = UMP + CO2. Its pathway is pyrimidine metabolism; UMP biosynthesis via de novo pathway; UMP from orotate: step 2/2. The sequence is that of Orotidine 5'-phosphate decarboxylase from Caldicellulosiruptor bescii (strain ATCC BAA-1888 / DSM 6725 / KCTC 15123 / Z-1320) (Anaerocellum thermophilum).